The chain runs to 144 residues: Large ribosomal subunit protein uL16 (144 aa).

Belongs to the universal ribosomal protein uL16 family. In terms of assembly, part of the 50S ribosomal subunit.

In terms of biological role, binds 23S rRNA and is also seen to make contacts with the A and possibly P site tRNAs. This Thermoanaerobacter pseudethanolicus (strain ATCC 33223 / 39E) (Clostridium thermohydrosulfuricum) protein is Large ribosomal subunit protein uL16.